The following is a 503-amino-acid chain: Inosine-5'-monophosphate dehydrogenase 1 (503 aa).

S2 carries the N-acetylserine modification. A CBS domain is found at 167–225 (MKSCDSSDYCVPWEIDFEKLEFVLEDKQKGFVVLERDGETVNVVTKDDIQRVKGYPKSG). NAD(+) is bound by residues 265-267 (DSS) and 315-317 (GMG). G317 and G319 together coordinate K(+). S320 lines the IMP pocket. K(+) is bound at residue C322. The active-site Thioimidate intermediate is C322. IMP-binding positions include 355 to 357 (DGG), 378 to 379 (GS), and 402 to 406 (YRGMG). R418 serves as the catalytic Proton acceptor. An IMP-binding site is contributed by Q430. The K(+) site is built by E489, G490, and G491.

Belongs to the IMPDH/GMPR family. In terms of assembly, homotetramer. It depends on K(+) as a cofactor.

It is found in the cytoplasm. The catalysed reaction is IMP + NAD(+) + H2O = XMP + NADH + H(+). Its pathway is purine metabolism; XMP biosynthesis via de novo pathway; XMP from IMP: step 1/1. With respect to regulation, mycophenolic acid (MPA) is a non-competitive inhibitor that prevents formation of the closed enzyme conformation by binding to the same site as the amobile flap. In contrast, mizoribine monophosphate (MZP) is a competitive inhibitor that induces the closed conformation. MPA is a potent inhibitor of mammalian IMPDHs but a poor inhibitor of the bacterial enzymes. MZP is a more potent inhibitor of bacterial IMPDH. In terms of biological role, catalyzes the conversion of inosine 5'-phosphate (IMP) to xanthosine 5'-phosphate (XMP), the first committed and rate-limiting step in the de novo synthesis of guanine nucleotides, and therefore plays an important role in the regulation of cell growth. This is Inosine-5'-monophosphate dehydrogenase 1 from Arabidopsis thaliana (Mouse-ear cress).